A 548-amino-acid chain; its full sequence is Membrane protein insertase YidC (548 aa).

A helical membrane pass occupies residues 6–26 (NLLVIALLFVSFMIWQAWEQD). The segment at 28 to 56 (NPQPQTQQTTQTTTTAAGSAADQGVPASG) is disordered. The span at 29–42 (PQPQTQQTTQTTTT) shows a compositional bias: low complexity. A run of 4 helical transmembrane segments spans residues 350–370 (FVGNWGFSIIIITFIVRGIMY), 424–444 (FPLIIQMPIFLALYYMLMGSI), 458–478 (LSAQDPYYILPILMGVTMFFI), and 499–519 (PVIFTVFFLWFPSGLVLYYIV).

This sequence belongs to the OXA1/ALB3/YidC family. Type 1 subfamily. As to quaternary structure, interacts with the Sec translocase complex via SecD. Specifically interacts with transmembrane segments of nascent integral membrane proteins during membrane integration.

The protein resides in the cell inner membrane. Functionally, required for the insertion and/or proper folding and/or complex formation of integral membrane proteins into the membrane. Involved in integration of membrane proteins that insert both dependently and independently of the Sec translocase complex, as well as at least some lipoproteins. Aids folding of multispanning membrane proteins. The sequence is that of Membrane protein insertase YidC from Salmonella typhimurium (strain LT2 / SGSC1412 / ATCC 700720).